The chain runs to 692 residues: Phenoloxidase subunit 2 (692 aa).

The propeptide occupies Met1–Val97. Cu cation-binding residues include His213, His217, and His243. 3 N-linked (GlcNAc...) asparagine glycosylation sites follow: Asn256, Asn295, and Asn309. Glu351 (proton acceptor) is an active-site residue. His366, His370, and His406 together coordinate Cu cation. Residue Asn494 is glycosylated (N-linked (GlcNAc...) asparagine). 2 cysteine pairs are disulfide-bonded: Cys583–Cys628 and Cys585–Cys635.

It belongs to the tyrosinase family. Heterodimer. Requires Cu(2+) as cofactor.

The protein localises to the secreted. It catalyses the reaction L-tyrosine + O2 = L-dopaquinone + H2O. It carries out the reaction 2 L-dopa + O2 = 2 L-dopaquinone + 2 H2O. Copper-containing oxidase that functions in the formation of pigments such as melanins and other polyphenolic compounds. Catalyzes the rate-limiting conversions of tyrosine to DOPA, DOPA to DOPA-quinone and possibly 5,6 dihydroxyindole to indole-5'6 quinone. Binds to the surface of hemocytes and is involved in hemocyte melanization. Binds the A.niger cell wall component alpha-1,3-glucan, a fungal pathogen-associated molecular pattern (PAMP) that activates the host immune response. The sequence is that of Phenoloxidase subunit 2 from Galleria mellonella (Greater wax moth).